An 835-amino-acid chain; its full sequence is Invasin (835 aa).

Residues 451-541 enclose the Big-1 domain; the sequence is VITSEVTDDG…QQATVDVRFA (91 aa).

Belongs to the intimin/invasin family.

The protein resides in the cell outer membrane. Functionally, invasin is a protein that allows enteric bacteria to penetrate cultured mammalian cells. The entry of invasin in the cell is mediated by binding several beta-1 chain integrins. The sequence is that of Invasin from Yersinia enterocolitica.